A 335-amino-acid polypeptide reads, in one-letter code: Luciferase-like monooxygenase (335 aa).

It to bacterial alkanal monooxygenase alpha and beta chains.

This is Luciferase-like monooxygenase (yhbW) from Escherichia coli O6:H1 (strain CFT073 / ATCC 700928 / UPEC).